We begin with the raw amino-acid sequence, 453 residues long: Zinc finger and BTB domain-containing protein 44 (453 aa).

A Glycyl lysine isopeptide (Lys-Gly) (interchain with G-Cter in SUMO2) cross-link involves residue Lys-4. The 68-residue stretch at 31-98 (CDITIRVQDR…AYTATLSINT (68 aa)) folds into the BTB domain. A phosphoserine mark is found at Ser-135, Ser-159, Ser-161, Ser-165, Ser-191, Ser-194, and Ser-199. At Thr-200 the chain carries Phosphothreonine. Residues 241–265 (QPEKAKQAENTRTLELPGPSEAGRR) are disordered. Residue Lys-290 forms a Glycyl lysine isopeptide (Lys-Gly) (interchain with G-Cter in SUMO2) linkage. Disordered regions lie at residues 295 to 324 (SDEEVHEEVSQPVSASQSSLSDQQTVPGSE) and 336 to 368 (SSSIGSVDEGVTEGLPTLQSTSSTNAHADEDDR). Low complexity predominate over residues 304–318 (SQPVSASQSSLSDQQ). The span at 352–361 (TLQSTSSTNA) shows a compositional bias: polar residues. C2H2-type zinc fingers lie at residues 399-421 (FQCPTCGVRFTRIQNLKQHMLIH) and 427-449 (FQCDCCGKKFTRAYSLKMHRLKH).

The protein localises to the nucleus. This Rattus norvegicus (Rat) protein is Zinc finger and BTB domain-containing protein 44 (Zbtb44).